A 453-amino-acid chain; its full sequence is Allantoinase (453 aa).

His-59, His-61, Lys-146, His-186, His-242, and Asp-315 together coordinate Zn(2+). Lys-146 bears the N6-carboxylysine mark.

It belongs to the metallo-dependent hydrolases superfamily. Allantoinase family. As to quaternary structure, homotetramer. The cofactor is Zn(2+). Carboxylation allows a single lysine to coordinate two zinc ions.

It catalyses the reaction (S)-allantoin + H2O = allantoate + H(+). It participates in nitrogen metabolism; (S)-allantoin degradation; allantoate from (S)-allantoin: step 1/1. In terms of biological role, catalyzes the conversion of allantoin (5-ureidohydantoin) to allantoic acid by hydrolytic cleavage of the five-member hydantoin ring. This is Allantoinase from Salmonella paratyphi B (strain ATCC BAA-1250 / SPB7).